The primary structure comprises 248 residues: Triosephosphate isomerase (248 aa).

Substrate is bound at residue 9 to 11 (NWK). Residue His-94 is the Electrophile of the active site. Glu-166 serves as the catalytic Proton acceptor. Residues Gly-172, Ser-212, and 233-234 (GG) each bind substrate.

Belongs to the triosephosphate isomerase family. In terms of assembly, homodimer.

It is found in the cytoplasm. It carries out the reaction D-glyceraldehyde 3-phosphate = dihydroxyacetone phosphate. Its pathway is carbohydrate biosynthesis; gluconeogenesis. It functions in the pathway carbohydrate degradation; glycolysis; D-glyceraldehyde 3-phosphate from glycerone phosphate: step 1/1. Its function is as follows. Involved in the gluconeogenesis. Catalyzes stereospecifically the conversion of dihydroxyacetone phosphate (DHAP) to D-glyceraldehyde-3-phosphate (G3P). The polypeptide is Triosephosphate isomerase (Clostridium botulinum (strain Loch Maree / Type A3)).